Reading from the N-terminus, the 191-residue chain is Shikimate kinase (191 aa).

24-29 (GSGKTS) contributes to the ATP binding site. T28 serves as a coordination point for Mg(2+). Residues D46, R70, and G92 each coordinate substrate. Residue R130 participates in ATP binding. Position 149 (R149) interacts with substrate.

It belongs to the shikimate kinase family. As to quaternary structure, monomer. Mg(2+) is required as a cofactor.

The protein resides in the cytoplasm. The catalysed reaction is shikimate + ATP = 3-phosphoshikimate + ADP + H(+). Its pathway is metabolic intermediate biosynthesis; chorismate biosynthesis; chorismate from D-erythrose 4-phosphate and phosphoenolpyruvate: step 5/7. Its function is as follows. Catalyzes the specific phosphorylation of the 3-hydroxyl group of shikimic acid using ATP as a cosubstrate. This is Shikimate kinase from Parasynechococcus marenigrum (strain WH8102).